The sequence spans 1658 residues: Collagen alpha-1(XXVII) chain B (1658 aa).

Residues 1-38 (MEPDNTPSSRLRAAGVGGRAVFFCMVLYCTCCLRLAQA) form the signal peptide. The 164-residue stretch at 66 to 229 (GVILTTRARI…NYCKYIKKQC (164 aa)) folds into the Laminin G-like domain. A compositionally biased stretch (polar residues) spans 308 to 323 (SIRNRTSQISPKPTQQ). Disordered regions lie at residues 308–332 (SIRN…KKER), 345–364 (VTDS…TTTT), 427–550 (GLKG…GNMG), 571–614 (GERG…APGP), 637–1332 (GPKG…DAGE), and 1377–1415 (IIGP…GPPG). The interval 424–1417 (ELTGLKGEPG…RGPPGPPGLP (994 aa)) is triple-helical region. Collagen-like domains are found at residues 425 to 478 (LTGL…GNPG), 493 to 552 (GLVG…MGPK), 556 to 615 (GFIG…PGPV), 622 to 681 (GDMG…PGLP), 685 to 744 (GKPG…PGLE), 748 to 807 (GPVG…MGLA), and 811 to 870 (GDRG…RGPD). The segment covering 434–444 (LPGPPGPPGQP) has biased composition (pro residues). The span at 491–506 (DPGLVGLPGQPGQPGR) shows a compositional bias: low complexity. Low complexity-rich tracts occupy residues 657–666 (LGLPGEPGEP) and 678–692 (PGLP…PQGK). Positions 733–742 (GIPGPGGLPG) are enriched in gly residues. 2 stretches are compositionally biased toward low complexity: residues 837-852 (RGLS…HGSR) and 875-890 (EKGM…PPGK). Collagen-like domains are found at residues 892 to 951 (GLSG…IGLP), 952 to 1011 (GKAG…VGLE), 1024 to 1083 (GTEG…IGPK), 1084 to 1137 (GSRG…DGKV), 1139 to 1198 (GPPG…KGSK), 1199 to 1258 (GNKG…PGDL), 1268 to 1327 (GKPG…KGQP), and 1361 to 1420 (GPQG…PAVA). Over residues 1040 to 1058 (PEGKPGKIGERGKPGEKGS) the composition is skewed to basic and acidic residues. The segment covering 1112–1124 (HQGPQGSLGSPGP) has biased composition (low complexity). Residues 1125 to 1137 (KGEKGEQGDDGKV) are compositionally biased toward basic and acidic residues. Residues 1215 to 1230 (NRGSPGPVGVPGPRGV) are compositionally biased toward low complexity. The segment covering 1307-1316 (GLNGGMGFPG) has biased composition (gly residues). The span at 1402-1415 (RGPPGPRGPPGPPG) shows a compositional bias: pro residues. The propeptide at 1421–1658 (FSHENEALGA…HLEVGPVCFL (238 aa)) is C-terminal propeptide. Positions 1458–1658 (SEIFKTLHYL…HLEVGPVCFL (201 aa)) constitute a Fibrillar collagen NC1 domain. Intrachain disulfides connect Cys1488–Cys1520, Cys1529–Cys1656, and Cys1565–Cys1609. Ca(2+)-binding residues include Asp1506, Asn1508, Cys1511, and Asp1514. Asn1567 carries N-linked (GlcNAc...) asparagine glycosylation.

The protein belongs to the fibrillar collagen family. Weakly expressed in the notochord from the 6 somite stage. Expressed throughout the notochord at 13 somites, then becomes restricted to the distal tip of the notochord by 24 hpf. Also expressed in head cartilages by 48 hpf.

The protein localises to the secreted. The protein resides in the extracellular space. It is found in the extracellular matrix. Functionally, may play a role during the calcification of cartilage and the transition of cartilage to bone. Together with col27a1a, plays a role in development of the notochord and axial skeleton. The protein is Collagen alpha-1(XXVII) chain B (col27a1b) of Danio rerio (Zebrafish).